Reading from the N-terminus, the 226-residue chain is Phosphoglycolate phosphatase (226 aa).

The Nucleophile role is filled by aspartate 9. The Mg(2+) site is built by aspartate 9 and aspartate 11. Substrate is bound at residue lysine 150. Positions 173 and 177 each coordinate Mg(2+).

The protein belongs to the archaeal SPP-like hydrolase family. Mg(2+) is required as a cofactor.

The enzyme catalyses 2-phosphoglycolate + H2O = glycolate + phosphate. Catalyzes the dephosphorylation of 2-phosphoglycolate. This chain is Phosphoglycolate phosphatase, found in Methanococcoides burtonii (strain DSM 6242 / NBRC 107633 / OCM 468 / ACE-M).